The chain runs to 206 residues: Large ribosomal subunit protein uL4 (206 aa).

Residues 46-89 (GNRAQKTRAEVKHSTKKPWRQKGTGRARSGMTSSPLWRKGGRAF) form a disordered region. The span at 59-70 (STKKPWRQKGTG) shows a compositional bias: basic residues.

Belongs to the universal ribosomal protein uL4 family. In terms of assembly, part of the 50S ribosomal subunit.

One of the primary rRNA binding proteins, this protein initially binds near the 5'-end of the 23S rRNA. It is important during the early stages of 50S assembly. It makes multiple contacts with different domains of the 23S rRNA in the assembled 50S subunit and ribosome. Its function is as follows. Forms part of the polypeptide exit tunnel. The protein is Large ribosomal subunit protein uL4 of Neisseria gonorrhoeae (strain NCCP11945).